Consider the following 427-residue polypeptide: UPF0597 protein CD630_32320 (427 aa).

This sequence belongs to the UPF0597 family.

In Clostridioides difficile (strain 630) (Peptoclostridium difficile), this protein is UPF0597 protein CD630_32320.